A 566-amino-acid chain; its full sequence is E3 ubiquitin-protein ligase Rnf220 (566 aa).

Lys277 is covalently cross-linked (Glycyl lysine isopeptide (Lys-Gly) (interchain with G-Cter in SUMO2)). Positions 277–300 (KREGDSPTASPHSSATEDLHHSDR) are disordered. Residues 291-300 (ATEDLHHSDR) are compositionally biased toward basic and acidic residues. Ser390 carries the phosphoserine modification. Residues 485-513 (EESAVTTFEALKARVRELERQLSRGDRYK) are a coiled coil. A required for targeting to the cytoplasm region spans residues 514–522 (CLICMDSYS). The segment at 514-553 (CLICMDSYSMPLTSIQCWHVHCEECWLRTLGAKKLCPQCN) adopts an RING-type zinc-finger fold.

As to quaternary structure, interacts with SIN3B. Interacts with CTNNB1 (via Armadillo repeats 2-8). Interacts with USP7 (via MATH domain). In terms of processing, auto-ubiquitinated; leads to proteasomal degradation. As to expression, in the brain, expressed in the hippocampus, telenecephalon and cerebellum. No expression in astro glial cells or in neural progenitor cells.

The protein localises to the cytoplasm. The protein resides in the nucleus. The enzyme catalyses S-ubiquitinyl-[E2 ubiquitin-conjugating enzyme]-L-cysteine + [acceptor protein]-L-lysine = [E2 ubiquitin-conjugating enzyme]-L-cysteine + N(6)-ubiquitinyl-[acceptor protein]-L-lysine.. It functions in the pathway protein modification; protein ubiquitination. In terms of biological role, E3 ubiquitin-protein ligase that promotes the ubiquitination and proteasomal degradation of SIN3B. Independently of its E3 ligase activity, acts as a CTNNB1 stabilizer through USP7-mediated deubiquitination of CTNNB1 and promotes Wnt signaling. Plays a critical role in the regulation of nuclear lamina. This is E3 ubiquitin-protein ligase Rnf220 (Rnf220) from Mus musculus (Mouse).